The following is a 504-amino-acid chain: Maturase K (504 aa).

The protein belongs to the intron maturase 2 family. MatK subfamily.

Its subcellular location is the plastid. It is found in the chloroplast. Its function is as follows. Usually encoded in the trnK tRNA gene intron. Probably assists in splicing its own and other chloroplast group II introns. This Quercus suber (Cork oak) protein is Maturase K.